We begin with the raw amino-acid sequence, 1155 residues long: Probable translation initiation factor IF-2 (1155 aa).

The DOD-type homing endonuclease domain occupies 237 to 367 (FAGVMFGDGC…LSILLLRFEI (131 aa)). Residues 561–781 (TTETHNFIAN…VAGLAQKFLE (221 aa)) enclose the tr-type G domain. Residues 634–638 (DTPGH) and 688–691 (NKID) contribute to the GTP site.

It belongs to the TRAFAC class translation factor GTPase superfamily. Classic translation factor GTPase family. IF-2 subfamily. In terms of processing, this protein undergoes a protein self splicing that involves a post-translational excision of the intervening region (intein) followed by peptide ligation.

Function in general translation initiation by promoting the binding of the formylmethionine-tRNA to ribosomes. Seems to function along with eIF-2. In Methanocaldococcus jannaschii (strain ATCC 43067 / DSM 2661 / JAL-1 / JCM 10045 / NBRC 100440) (Methanococcus jannaschii), this protein is Probable translation initiation factor IF-2 (infB).